The chain runs to 186 residues: Imidazoleglycerol-phosphate dehydratase (186 aa).

This sequence belongs to the imidazoleglycerol-phosphate dehydratase family.

The protein resides in the cytoplasm. It catalyses the reaction D-erythro-1-(imidazol-4-yl)glycerol 3-phosphate = 3-(imidazol-4-yl)-2-oxopropyl phosphate + H2O. The protein operates within amino-acid biosynthesis; L-histidine biosynthesis; L-histidine from 5-phospho-alpha-D-ribose 1-diphosphate: step 6/9. In Dictyoglomus thermophilum (strain ATCC 35947 / DSM 3960 / H-6-12), this protein is Imidazoleglycerol-phosphate dehydratase.